A 183-amino-acid chain; its full sequence is Tumor necrosis factor ligand superfamily member 4 (183 aa).

Residues 1–23 lie on the Cytoplasmic side of the membrane; it reads MERVQPLEENVGNAARPRFERNK. Residues 24 to 50 form a helical; Signal-anchor for type II membrane protein membrane-spanning segment; the sequence is LLLVASVIQGLGLLLCFTYICLHFSAL. A THD domain is found at 51–173; sequence QVSHRYPRIQ…HVNGGELILI (123 aa). At 51–183 the chain is on the extracellular side; sequence QVSHRYPRIQ…HQNPGEFCVL (133 aa). N-linked (GlcNAc...) asparagine glycans are attached at residues asparagine 90, asparagine 114, asparagine 152, and asparagine 157. Residues cysteine 97 and cysteine 181 are joined by a disulfide bond.

It belongs to the tumor necrosis factor family. As to quaternary structure, homotrimer.

It localises to the membrane. Its function is as follows. Cytokine that binds to TNFRSF4. Co-stimulates T-cell proliferation and cytokine production. The polypeptide is Tumor necrosis factor ligand superfamily member 4 (TNFSF4) (Homo sapiens (Human)).